A 271-amino-acid polypeptide reads, in one-letter code: Extent of cell elongation protein 1 (271 aa).

A signal peptide spans 1–18 (MKFSKIACATVFALSSQA). The helical transmembrane segment at 62–82 (SIIGIIMGILGNIPQVIQIIM) threads the bilayer.

As to quaternary structure, polymerizes in solution to form membrane pores. In terms of processing, cleavage by KEX2 generates 8 peptides ECE1-I to ECE1-VIII, all terminating in Lys-Arg. Only peptide ECE1-III, called candidalysin, shows toxin activity.

The protein localises to the secreted. The protein resides in the host cell membrane. Functionally, secreted protein cleaved by KEX2 in 8 similar peptides (ECE1-I to ECE1-VIII). Stimulates biofilm formation. In terms of biological role, acts as a cytolytic peptide toxin that directly damages host epithelial membranes, triggers a danger response signaling pathway and activates epithelial immunity. Polymerizes in solution to form membrane pores to damage epithelial cells. Induces calcium influx, oxidative stress, mitochondrial dysfunction and ATP depletion in host cells, leading to epithelial necrosis. Serves as a danger signal that potentiates the immune response, and more specifically IL-17 response. Induces cytokine/chemokine secretion by host (especially CCL2/3/4, CXCL1 and S100A8), neutrophil recruitment, and promotes mortality in zebrafish and murine models of systemic fungal infection. Mediates distinct epithelial inflammatory responses through p38, EGFR-ERK and TREM-1/DAP12 pathways. Acts as one of the hypha-derived drivers of NLRP3 inflammasome responses in primary macrophages and thus contributes to the capacity to induce maturation and secretion of IL-1beta from primary macrophages. Stimulates mast cells by mediating cross-talk between signaling pathways activated by the dectin-1 receptor and MAPKs. Enables escape via the gasdermin-mediated pyroptosis, as well as a cell lysis pathway associated with macrophage extracellular trap formation termed ETosis. Acts as the main hemolytic factor of C.albicans. As an exotoxine, also promotes alcohol-associated liver disease or oral carcinogenesis. In Candida albicans (strain SC5314 / ATCC MYA-2876) (Yeast), this protein is Extent of cell elongation protein 1.